Reading from the N-terminus, the 321-residue chain is Homoserine O-acetyltransferase (321 aa).

The active-site Acyl-thioester intermediate is C142. Residues K163 and S192 each coordinate substrate. The active-site Proton acceptor is H235. E237 is a catalytic residue. R249 contacts substrate.

It belongs to the MetA family.

Its subcellular location is the cytoplasm. The enzyme catalyses L-homoserine + acetyl-CoA = O-acetyl-L-homoserine + CoA. It participates in amino-acid biosynthesis; L-methionine biosynthesis via de novo pathway; O-acetyl-L-homoserine from L-homoserine: step 1/1. Its function is as follows. Transfers an acetyl group from acetyl-CoA to L-homoserine, forming acetyl-L-homoserine. This is Homoserine O-acetyltransferase from Lactococcus lactis subsp. lactis (strain IL1403) (Streptococcus lactis).